The primary structure comprises 436 residues: Phosphatidylinositol transfer protein CSR1 (436 aa).

Residues 85–104 (VYDAEKVEDSDAEKEKPTPQ) form a disordered region. The segment covering 86–102 (YDAEKVEDSDAEKEKPT) has biased composition (basic and acidic residues). In terms of domain architecture, CRAL-TRIO spans 188–347 (KKGIVKQLEL…ELGGKDEYNF (160 aa)).

The protein belongs to the PITP family. Binds phosphatidylinositol (PtdIns).

The protein localises to the cytoplasm. Its subcellular location is the endosome. Functionally, non-classical phosphatidylinositol (PtdIns) transfer protein (PITP), which exhibits PtdIns-binding/transfer activity in the absence of detectable PtdCho-binding/transfer activity. May also regulate post-Golgi membrane-trafficking events and have a role resistance to oxidative stress. The protein is Phosphatidylinositol transfer protein CSR1 (CSR1) of Eremothecium gossypii (strain ATCC 10895 / CBS 109.51 / FGSC 9923 / NRRL Y-1056) (Yeast).